The following is a 183-amino-acid chain: Large ribosomal subunit protein uL6 (183 aa).

The protein belongs to the universal ribosomal protein uL6 family. In terms of assembly, part of the 50S ribosomal subunit.

This protein binds to the 23S rRNA, and is important in its secondary structure. It is located near the subunit interface in the base of the L7/L12 stalk, and near the tRNA binding site of the peptidyltransferase center. This is Large ribosomal subunit protein uL6 from Porphyromonas gingivalis (strain ATCC 33277 / DSM 20709 / CIP 103683 / JCM 12257 / NCTC 11834 / 2561).